The primary structure comprises 303 residues: Recombination-associated protein RdgC (303 aa).

This sequence belongs to the RdgC family.

It is found in the cytoplasm. Its subcellular location is the nucleoid. May be involved in recombination. The chain is Recombination-associated protein RdgC from Yersinia enterocolitica serotype O:8 / biotype 1B (strain NCTC 13174 / 8081).